The primary structure comprises 271 residues: Oxamate carbamoyltransferase subunit AllH (271 aa).

The protein belongs to the AllH family. As to quaternary structure, the OXTCase is composed of 3 subunits, AllF, AllG and AllH. It depends on Mg(2+) as a cofactor.

The enzyme catalyses oxamate + carbamoyl phosphate = N-carbamoyl-2-oxoglycine + phosphate. Its pathway is nitrogen metabolism; (S)-allantoin degradation. Its function is as follows. Component of a carbamoyltransferase involved in the anaerobic nitrogen utilization via the assimilation of allantoin. Catalyzes the conversion of oxalurate (N-carbamoyl-2-oxoglycine) to oxamate and carbamoyl phosphate. The polypeptide is Oxamate carbamoyltransferase subunit AllH (Escherichia coli O157:H7).